The chain runs to 405 residues: Succinyl-CoA--L-malate CoA-transferase beta subunit (405 aa).

Catalysis depends on Asp-175, which acts as the Nucleophile.

It belongs to the CoA-transferase III family. As to quaternary structure, forms a large complex composed of six heterodimers (alpha, beta).

The enzyme catalyses succinyl-CoA + (S)-malate = (S)-malyl-CoA + succinate. It catalyses the reaction (3S)-citramalate + succinyl-CoA = (3S)-citramalyl-CoA + succinate. Functionally, involved in the 3-hydroxypropionate cycle used for autotrophic carbon dioxide fixation. Catalyzes the transfer of CoA moiety from succinyl-CoA to L-malate to yield L-malyl-CoA. This chain is Succinyl-CoA--L-malate CoA-transferase beta subunit (smtB), found in Chloroflexus aurantiacus (strain ATCC 29366 / DSM 635 / J-10-fl).